The primary structure comprises 60 residues: UPF0434 protein Ssed_2824 (60 aa).

This sequence belongs to the UPF0434 family.

The chain is UPF0434 protein Ssed_2824 from Shewanella sediminis (strain HAW-EB3).